A 284-amino-acid polypeptide reads, in one-letter code: D-tagatose-1,6-bisphosphate aldolase subunit GatY (284 aa).

Catalysis depends on Asp-82, which acts as the Proton donor. Residues His-83 and His-180 each contribute to the Zn(2+) site. Gly-181 is a binding site for dihydroxyacetone phosphate. His-208 serves as a coordination point for Zn(2+). Dihydroxyacetone phosphate is bound by residues 209-211 (GAS) and 230-233 (NVAT).

This sequence belongs to the class II fructose-bisphosphate aldolase family. TagBP aldolase GatY subfamily. As to quaternary structure, forms a complex with GatZ. Zn(2+) serves as cofactor.

It catalyses the reaction D-tagatofuranose 1,6-bisphosphate = D-glyceraldehyde 3-phosphate + dihydroxyacetone phosphate. It participates in carbohydrate metabolism; D-tagatose 6-phosphate degradation; D-glyceraldehyde 3-phosphate and glycerone phosphate from D-tagatose 6-phosphate: step 2/2. In terms of biological role, catalytic subunit of the tagatose-1,6-bisphosphate aldolase GatYZ, which catalyzes the reversible aldol condensation of dihydroxyacetone phosphate (DHAP or glycerone-phosphate) with glyceraldehyde 3-phosphate (G3P) to produce tagatose 1,6-bisphosphate (TBP). Requires GatZ subunit for full activity and stability. Is involved in the catabolism of galactitol. This chain is D-tagatose-1,6-bisphosphate aldolase subunit GatY, found in Salmonella typhi.